We begin with the raw amino-acid sequence, 416 residues long: Chorismate synthase (416 aa).

2 residues coordinate NADP(+): Arg40 and Arg46. FMN is bound by residues 135–137 (RAS), 256–257 (QA), Gly300, 315–319 (KPIAT), and Arg341.

This sequence belongs to the chorismate synthase family. As to quaternary structure, homotetramer. It depends on FMNH2 as a cofactor.

It catalyses the reaction 5-O-(1-carboxyvinyl)-3-phosphoshikimate = chorismate + phosphate. It participates in metabolic intermediate biosynthesis; chorismate biosynthesis; chorismate from D-erythrose 4-phosphate and phosphoenolpyruvate: step 7/7. Its function is as follows. Catalyzes the anti-1,4-elimination of the C-3 phosphate and the C-6 proR hydrogen from 5-enolpyruvylshikimate-3-phosphate (EPSP) to yield chorismate, which is the branch point compound that serves as the starting substrate for the three terminal pathways of aromatic amino acid biosynthesis. This reaction introduces a second double bond into the aromatic ring system. The sequence is that of Chorismate synthase from Kocuria rhizophila (strain ATCC 9341 / DSM 348 / NBRC 103217 / DC2201).